We begin with the raw amino-acid sequence, 448 residues long: Endoglucanase (448 aa).

The signal sequence occupies residues 1 to 34 (MFSKIKKINFFKKTFSFLIAVVMMLFTVLGTNTY). Substrate-binding positions include His-70, 74 to 75 (WY), Tyr-101, and His-137. Catalysis depends on Glu-175, which acts as the Proton donor. A substrate-binding site is contributed by Tyr-237. Residue Glu-263 is the Nucleophile of the active site. Substrate-binding positions include 269–270 (AS), Trp-297, and 302–304 (KSE).

It belongs to the glycosyl hydrolase 5 (cellulase A) family.

The enzyme catalyses Endohydrolysis of (1-&gt;4)-beta-D-glucosidic linkages in cellulose, lichenin and cereal beta-D-glucans.. The chain is Endoglucanase (eglA) from Clostridium saccharobutylicum.